The following is a 303-amino-acid chain: Probable WRKY transcription factor 30 (303 aa).

The disordered stretch occupies residues 65–92; it reads DQVSQGGGSPKSDDSDQEPLVIKSSKKS. A DNA-binding region (WRKY) is located at residues 107 to 175; that stretch reads GVDRTLDDGF…YRGIHSCSQA (69 aa). Low complexity predominate over residues 266–278; sequence SGSASHSASNSPS. Positions 266–291 are disordered; sequence SGSASHSASNSPSTVPLESPFESYDP.

It belongs to the WRKY group III family. Interacts with WRKY53, WRKY54 and WRKY70.

It is found in the nucleus. Functionally, transcription factor. Interacts specifically with the W box (5'-(T)TGAC[CT]-3'), a frequently occurring elicitor-responsive cis-acting element. The polypeptide is Probable WRKY transcription factor 30 (Arabidopsis thaliana (Mouse-ear cress)).